The following is a 138-amino-acid chain: MNIIDRFEQENISKRTANKKIPDFEAGDTVKVTVKIVDRSIEKDGKEKLTERFQAYEGVVIAKRNRGITSSFLVRKISHGEGVERRFMTYSPIVHSIDVVKYGVVRRAKLYYLRNRSGKSARIKERHIPIAKTKAAKA.

This sequence belongs to the bacterial ribosomal protein bL19 family.

This protein is located at the 30S-50S ribosomal subunit interface and may play a role in the structure and function of the aminoacyl-tRNA binding site. This chain is Large ribosomal subunit protein bL19, found in Rickettsia rickettsii (strain Iowa).